The following is a 297-amino-acid chain: Acetyl-coenzyme A carboxylase carboxyl transferase subunit beta (297 aa).

The CoA carboxyltransferase N-terminal domain maps to 27 to 296 (LWHKCPACEA…PEQAREAAAV (270 aa)). C31, C34, C50, and C53 together coordinate Zn(2+). The segment at 31–53 (CPACEAVLYRPELEKTLDVCPKC) adopts a C4-type zinc-finger fold.

This sequence belongs to the AccD/PCCB family. In terms of assembly, acetyl-CoA carboxylase is a heterohexamer composed of biotin carboxyl carrier protein (AccB), biotin carboxylase (AccC) and two subunits each of ACCase subunit alpha (AccA) and ACCase subunit beta (AccD). Requires Zn(2+) as cofactor.

Its subcellular location is the cytoplasm. The catalysed reaction is N(6)-carboxybiotinyl-L-lysyl-[protein] + acetyl-CoA = N(6)-biotinyl-L-lysyl-[protein] + malonyl-CoA. The protein operates within lipid metabolism; malonyl-CoA biosynthesis; malonyl-CoA from acetyl-CoA: step 1/1. Its function is as follows. Component of the acetyl coenzyme A carboxylase (ACC) complex. Biotin carboxylase (BC) catalyzes the carboxylation of biotin on its carrier protein (BCCP) and then the CO(2) group is transferred by the transcarboxylase to acetyl-CoA to form malonyl-CoA. In Pseudomonas putida (strain W619), this protein is Acetyl-coenzyme A carboxylase carboxyl transferase subunit beta.